Consider the following 84-residue polypeptide: Cysteine-rich protamine (84 aa).

Intrachain disulfides connect Cys16/Cys24 and Cys64/Cys80.

In terms of assembly, cross-linked by interchain disulfide bonds around the DNA-helix. As to expression, testis.

It is found in the nucleus. The protein localises to the chromosome. Its function is as follows. Protamines substitute for histones in the chromatin of sperm during the haploid phase of spermatogenesis. They compact sperm DNA into a highly condensed, stable and inactive complex. This protamine condenses spermiogenic chromatin in a pattern which comprises fibers with a progressively larger diameter and lamellae that finally undergo definitive coalescence. The polypeptide is Cysteine-rich protamine (Eledone cirrhosa (Curled octopus)).